A 281-amino-acid chain; its full sequence is uncharacterized protein (281 aa).

Residues 242–281 adopt a coiled-coil conformation; sequence IDKQSRKKNIIREINDIKSKINDLSNYMDNLISELDDLFD.

This is an uncharacterized protein from Acanthamoeba polyphaga (Amoeba).